Consider the following 120-residue polypeptide: Glycine cleavage system H protein (120 aa).

Residues 17-99 (VATVGITTYA…QGAGWFFKLK (83 aa)) form the Lipoyl-binding domain. Residue lysine 58 is modified to N6-lipoyllysine.

It belongs to the GcvH family. In terms of assembly, the glycine cleavage system is composed of four proteins: P, T, L and H. It depends on (R)-lipoate as a cofactor.

The glycine cleavage system catalyzes the degradation of glycine. The H protein shuttles the methylamine group of glycine from the P protein to the T protein. In Rhizobium etli (strain CIAT 652), this protein is Glycine cleavage system H protein.